Consider the following 520-residue polypeptide: Cytochrome P450 4F2 (520 aa).

A propeptide spanning residues 1–4 is cleaved from the precursor; sequence MSQL. Residues E328 and C468 each contribute to the heme site.

This sequence belongs to the cytochrome P450 family. Heme serves as cofactor. Liver. Also present in kidney: specifically expressed in the S2 and S3 segments of proximal tubules in cortex and outer medulla.

It localises to the microsome membrane. The protein localises to the endoplasmic reticulum membrane. The catalysed reaction is an organic molecule + reduced [NADPH--hemoprotein reductase] + O2 = an alcohol + oxidized [NADPH--hemoprotein reductase] + H2O + H(+). The enzyme catalyses (5Z,8Z,11Z,14Z)-eicosatetraenoate + reduced [NADPH--hemoprotein reductase] + O2 = 20-hydroxy-(5Z,8Z,11Z,14Z)-eicosatetraenoate + oxidized [NADPH--hemoprotein reductase] + H2O + H(+). It catalyses the reaction (5Z,8Z,11Z)-eicosatrienoate + reduced [NADPH--hemoprotein reductase] + O2 = 20-hydroxy-(5Z,8Z,11Z)-eicosatrienoate + oxidized [NADPH--hemoprotein reductase] + H2O + H(+). It carries out the reaction (5Z,8Z,11Z,14Z,17Z)-eicosapentaenoate + reduced [NADPH--hemoprotein reductase] + O2 = 20-hydroxy-(5Z,8Z,11Z,14Z,17Z)-eicosapentaenoate + oxidized [NADPH--hemoprotein reductase] + H2O + H(+). The catalysed reaction is (4Z,7Z,10Z,13Z,16Z,19Z)-docosahexaenoate + reduced [NADPH--hemoprotein reductase] + O2 = 22-hydroxy-(4Z,7Z,10Z,13Z,16Z,19Z)-docosahexaenoate + oxidized [NADPH--hemoprotein reductase] + H2O + H(+). The enzyme catalyses 8,9-epoxy-(5Z,11Z,14Z)-eicosatrienoate + reduced [NADPH--hemoprotein reductase] + O2 = 20-hydroxy-8,9-epoxy-(5Z,11Z,14Z)-eicosatrienoate + oxidized [NADPH--hemoprotein reductase] + H2O + H(+). It catalyses the reaction (9S,10R)-epoxy-octadecanoate + reduced [NADPH--hemoprotein reductase] + O2 = 18-hydroxy-(9S,10R)-epoxy-octadecanoate + oxidized [NADPH--hemoprotein reductase] + H2O + H(+). It carries out the reaction (9R,10S)-epoxy-octadecanoate + reduced [NADPH--hemoprotein reductase] + O2 = 18-hydroxy-(9R,10S)-epoxy-octadecanoate + oxidized [NADPH--hemoprotein reductase] + H2O + H(+). The catalysed reaction is 12,13-epoxy-(9Z)-octadecenoate + reduced [NADPH--hemoprotein reductase] + O2 = 18-hydroxy-12,13-epoxy-(9Z)-octadecenoate + oxidized [NADPH--hemoprotein reductase] + H2O + H(+). The enzyme catalyses 9,10-epoxy-(12Z)-octadecenoate + reduced [NADPH--hemoprotein reductase] + O2 = 18-hydroxy-9,10-epoxy-(12Z)-octadecenoate + oxidized [NADPH--hemoprotein reductase] + H2O + H(+). It catalyses the reaction 8-hydroxy-(5Z,9E,11Z,14Z)-eicosatetraenoate + reduced [NADPH--hemoprotein reductase] + O2 = 8,20-dihydroxy-(5Z,9E,11Z,14Z)-eicosatetraenoate + oxidized [NADPH--hemoprotein reductase] + H2O + H(+). It carries out the reaction 12-hydroxy-(5Z,8Z,10E,14Z)-eicosatetraenoate + reduced [NADPH--hemoprotein reductase] + O2 = 12,20-dihydroxy-(5Z,8Z,10E,14Z)-eicosatetraenoate + oxidized [NADPH--hemoprotein reductase] + H2O + H(+). The catalysed reaction is 12-hydroxyoctadecanoate + reduced [NADPH--hemoprotein reductase] + O2 = 12,18-dihydroxyoctadecanoate + oxidized [NADPH--hemoprotein reductase] + H2O + H(+). The enzyme catalyses docosanoate + reduced [NADPH--hemoprotein reductase] + O2 = 22-hydroxydocosanoate + oxidized [NADPH--hemoprotein reductase] + H2O + H(+). It catalyses the reaction 22-hydroxydocosanoate + reduced [NADPH--hemoprotein reductase] + O2 = 22-oxodocosanoate + oxidized [NADPH--hemoprotein reductase] + 2 H2O + H(+). It carries out the reaction 22-oxodocosanoate + reduced [NADPH--hemoprotein reductase] + O2 = docosanedioate + oxidized [NADPH--hemoprotein reductase] + H2O + 2 H(+). The catalysed reaction is tetracosanoate + reduced [NADPH--hemoprotein reductase] + O2 = 24-hydroxytetracosanoate + oxidized [NADPH--hemoprotein reductase] + H2O + H(+). The enzyme catalyses hexacosanoate + reduced [NADPH--hemoprotein reductase] + O2 = 26-hydroxyhexacosanoate + oxidized [NADPH--hemoprotein reductase] + H2O + H(+). It catalyses the reaction 26-hydroxyhexacosanoate + reduced [NADPH--hemoprotein reductase] + O2 = 26-oxohexacosanoate + oxidized [NADPH--hemoprotein reductase] + 2 H2O + H(+). It carries out the reaction 26-oxohexacosanoate + reduced [NADPH--hemoprotein reductase] + O2 = hexacosanedioate + oxidized [NADPH--hemoprotein reductase] + H2O + 2 H(+). The catalysed reaction is 3-hydroxyoctadecanoate + reduced [NADPH--hemoprotein reductase] + O2 = 3,18-dihydroxyoctadecanoate + oxidized [NADPH--hemoprotein reductase] + H2O + H(+). The enzyme catalyses 3-hydroxyhexadecanoate + reduced [NADPH--hemoprotein reductase] + O2 = 3,16-dihydroxyhexadecanoate + oxidized [NADPH--hemoprotein reductase] + H2O + H(+). It catalyses the reaction leukotriene B4 + reduced [NADPH--hemoprotein reductase] + O2 = 20-hydroxy-leukotriene B4 + oxidized [NADPH--hemoprotein reductase] + H2O + H(+). It carries out the reaction 6-trans-leukotriene B4 + reduced [NADPH--hemoprotein reductase] + O2 = 20-hydroxy-6-trans-leukotriene B4 + oxidized [NADPH--hemoprotein reductase] + H2O + H(+). The catalysed reaction is lipoxin A4 + reduced [NADPH--hemoprotein reductase] + O2 = 20-hydroxy-lipoxin A4 + oxidized [NADPH--hemoprotein reductase] + H2O + H(+). The enzyme catalyses menaquinone-4 + reduced [NADPH--hemoprotein reductase] + O2 = omega-hydroxymenaquinone-4 + oxidized [NADPH--hemoprotein reductase] + H2O + H(+). It catalyses the reaction phylloquinone + reduced [NADPH--hemoprotein reductase] + O2 = omega-hydroxyphylloquinone + oxidized [NADPH--hemoprotein reductase] + H2O + H(+). It carries out the reaction (+)-alpha-tocopherol + reduced [NADPH--hemoprotein reductase] + O2 = 13-hydroxy-alpha-tocopherol + oxidized [NADPH--hemoprotein reductase] + H2O + H(+). The catalysed reaction is gamma-tocopherol + NADPH + O2 + H(+) = 13-hydroxy-gamma-tocopherol + NADP(+) + H2O. The protein operates within lipid metabolism; arachidonate metabolism. It participates in lipid metabolism; leukotriene B4 degradation. Its pathway is cofactor degradation; phylloquinone degradation. With respect to regulation, inhibited by dietary sesamin. In terms of biological role, a cytochrome P450 monooxygenase involved in the metabolism of various endogenous substrates, including fatty acids, eicosanoids and vitamins. Mechanistically, uses molecular oxygen inserting one oxygen atom into a substrate, and reducing the second into a water molecule, with two electrons provided by NADPH via cytochrome P450 reductase (CPR; NADPH-ferrihemoprotein reductase). Catalyzes predominantly the oxidation of the terminal carbon (omega-oxidation) of long- and very long-chain fatty acids. Displays high omega-hydroxylase activity toward polyunsaturated fatty acids (PUFAs). Participates in the conversion of arachidonic acid to omega-hydroxyeicosatetraenoic acid (20-HETE), a signaling molecule acting both as vasoconstrictive and natriuretic with overall effect on arterial blood pressure. Plays a role in the oxidative inactivation of eicosanoids, including both pro-inflammatory and anti-inflammatory mediators such as leukotriene B4 (LTB4), lipoxin A4 (LXA4), and several HETEs. Catalyzes omega-hydroxylation of 3-hydroxy fatty acids. Converts monoepoxides of linoleic acid leukotoxin and isoleukotoxin to omega-hydroxylated metabolites. Contributes to the degradation of very long-chain fatty acids (VLCFAs) by catalyzing successive omega-oxidations and chain shortening. Plays an important role in vitamin metabolism by chain shortening. Catalyzes omega-hydroxylation of the phytyl chain of tocopherols (forms of vitamin E), with preference for gamma-tocopherols over alpha-tocopherols, thus promoting retention of alpha-tocopherols in tissues. Omega-hydroxylates and inactivates phylloquinone (vitamin K1), and menaquinone-4 (MK-4, a form of vitamin K2), both acting as cofactors in blood coagulation. This chain is Cytochrome P450 4F2, found in Homo sapiens (Human).